The primary structure comprises 425 residues: L-lysine 2,3-aminomutase (425 aa).

Residues 113–325 (HRYPDRVLLL…GLRGHTSGYA (213 aa)) enclose the Radical SAM core domain. Residues Cys-127, Cys-131, and Cys-134 each coordinate [4Fe-4S] cluster. Lys-339 is modified (N6-(pyridoxal phosphate)lysine).

The protein belongs to the radical SAM superfamily. KamA family. In terms of assembly, homotetramer. Requires [4Fe-4S] cluster as cofactor. Pyridoxal 5'-phosphate is required as a cofactor.

The catalysed reaction is L-lysine = (3S)-3,6-diaminohexanoate. It functions in the pathway amino-acid degradation; L-lysine degradation via acetate pathway. Catalyzes the interconversion of L-alpha-lysine and L-beta-lysine. This is L-lysine 2,3-aminomutase from Fusobacterium nucleatum subsp. nucleatum (strain ATCC 25586 / DSM 15643 / BCRC 10681 / CIP 101130 / JCM 8532 / KCTC 2640 / LMG 13131 / VPI 4355).